Reading from the N-terminus, the 180-residue chain is Bifunctional bis(5'-adenosyl)-triphosphatase/adenylylsulfatase FHIT (180 aa).

An HIT domain is found at 27–134 (SYAFGPYKID…LPRKGGDFEK (108 aa)). Substrate is bound by residues Asn52 and Gln108. The short motif at 119–123 (HVHIH) is the Histidine triad motif element. His121 acts as the Tele-AMP-histidine intermediate in catalysis. His123 is a binding site for substrate.

The enzyme catalyses P(1),P(3)-bis(5'-adenosyl) triphosphate + H2O = AMP + ADP + 2 H(+). It catalyses the reaction adenosine 5'-phosphosulfate + H2O = sulfate + AMP + 2 H(+). It carries out the reaction adenosine 5'-phosphosulfate + NH4(+) = adenosine 5'-phosphoramidate + sulfate + 2 H(+). The catalysed reaction is adenosine 5'-phosphoramidate + H2O = AMP + NH4(+). In terms of biological role, possesses dinucleoside triphosphate hydrolase activity. Cleaves P(1)-P(3)-bis(5'-adenosyl) triphosphate (Ap3A) to yield AMP and ADP. Exhibits adenylylsulfatase activity, hydrolyzing adenosine 5'-phosphosulfate to yield AMP and sulfate. Exhibits adenosine 5'-monophosphoramidase activity, hydrolyzing purine nucleotide phosphoramidates with a single phosphate group such as adenosine 5'monophosphoramidate (AMP-NH2) to yield AMP and NH2. Exhibits adenylylsulfate-ammonia adenylyltransferase, catalyzing the ammonolysis of adenosine 5'-phosphosulfate resulting in the formation of adenosine 5'-phosphoramidate. This Arabidopsis thaliana (Mouse-ear cress) protein is Bifunctional bis(5'-adenosyl)-triphosphatase/adenylylsulfatase FHIT.